The sequence spans 62 residues: Beta-defensin 133 (62 aa).

The first 21 residues, 1 to 21 (MKIHIFLFVLFFFLVPIATRG), serve as a signal peptide directing secretion. Intrachain disulfides connect cysteine 32–cysteine 60 and cysteine 39–cysteine 53.

The protein belongs to the beta-defensin family.

It localises to the secreted. Functionally, has antibacterial activity. This chain is Beta-defensin 133 (DEFB133), found in Pan troglodytes (Chimpanzee).